The sequence spans 217 residues: Glycosylphosphatidylinositol anchor biosynthesis protein 11 (217 aa).

The next 6 helical transmembrane spans lie at 45 to 61 (TWQTIPFHLIVLSYWFI), 74 to 94 (WLLVPCQVLYLALQFNPATVY), 111 to 131 (VTCILLTIPCMLLVVLFGAPF), 138 to 158 (TWLLSLHCCVLSYPAVYSVLN), 169 to 189 (YFISIAVGCWISCLAIPLDWD), and 195 to 215 (WPIPLVVGAQLGAMFGYTFCS).

The protein belongs to the PIGF family.

It localises to the endoplasmic reticulum membrane. Its pathway is glycolipid biosynthesis; glycosylphosphatidylinositol-anchor biosynthesis. Functionally, acts in the GPI biosynthetic pathway between GlcNAc-PI synthesis and GPI transfer to protein. This is Glycosylphosphatidylinositol anchor biosynthesis protein 11 (GPI11) from Eremothecium gossypii (strain ATCC 10895 / CBS 109.51 / FGSC 9923 / NRRL Y-1056) (Yeast).